We begin with the raw amino-acid sequence, 207 residues long: Large ribosomal subunit protein bL25 (207 aa).

The protein belongs to the bacterial ribosomal protein bL25 family. CTC subfamily. As to quaternary structure, part of the 50S ribosomal subunit; part of the 5S rRNA/L5/L18/L25 subcomplex. Contacts the 5S rRNA. Binds to the 5S rRNA independently of L5 and L18.

Its function is as follows. This is one of the proteins that binds to the 5S RNA in the ribosome where it forms part of the central protuberance. The chain is Large ribosomal subunit protein bL25 from Brucella abortus (strain S19).